A 634-amino-acid polypeptide reads, in one-letter code: MSDSFYRYDVIVIGGGHAGTEAALASARAGAHTLLLTHTIETVGAMSCNPAIGGIGKGHLVKEIDALGGAMAHAADLAGIQWRTLNASKGPAVRATRCQADRNLYRTAIRCIVQAQPKLTVFQAAVDDLIIHNGTCEADSVRGVITQTGLRFEAPSVVLTAGTFLAGKIHVGDTQYAAGRLGDPPATTLAARLRERPFAIDRLKTGTPPRIDGRTLDYGVMGEQPGDDPLPVMSFMGQVSDHPRQVSCWITQTTEQTHDIIRNALHRSPLYSGQIEGIGPRYCPSIEDKVVRFAEKTSHQIFVEPEGLDVAEIYPNGISTSLPFDVQLALVRSIHGFAQAHITRPGYAIEYDFFDPRGLKASLETKAVGGLFFAGQINGTTGYEEAAAQGLLAGLNAARHVHGLPAWSPRRDEAYLGVLVDDLITHGTTEPYRMFTSRAEYRLQLREDNADARLTGAGREMGLVDDARWARFSAKQEAVQRETARLSALWATPGNALGREVADALGVTVSRETNVLDLIKRPELNYATLMRVPTLGPGVDDAQVAEQVEISVKYTGYLDRQRDDIARQQRHETTPIPEGFDYAGVRGLSIEVQQKLEHVRPQHIGQAQRIPGMTPAAISLLLVHLERARRHRVA.

An FAD-binding site is contributed by 14–19 (GGGHAG). 279 to 293 (GPRYCPSIEDKVVRF) lines the NAD(+) pocket.

Belongs to the MnmG family. In terms of assembly, homodimer. Heterotetramer of two MnmE and two MnmG subunits. It depends on FAD as a cofactor.

It localises to the cytoplasm. In terms of biological role, NAD-binding protein involved in the addition of a carboxymethylaminomethyl (cmnm) group at the wobble position (U34) of certain tRNAs, forming tRNA-cmnm(5)s(2)U34. This Xanthomonas oryzae pv. oryzae (strain KACC10331 / KXO85) protein is tRNA uridine 5-carboxymethylaminomethyl modification enzyme MnmG.